A 386-amino-acid chain; its full sequence is 26S proteasome non-ATPase regulatory subunit 13 homolog B (386 aa).

Position 2 is an N-acetylalanine (alanine 2). Residues 174 to 347 (FSEFYKNALL…GTVYVSWAQP (174 aa)) enclose the PCI domain.

It belongs to the proteasome subunit S11 family. In terms of assembly, component of the 19S regulatory particle (RP/PA700) lid subcomplex of the 26S proteasome. The 26S proteasome is composed of a core protease (CP), known as the 20S proteasome, capped at one or both ends by the 19S regulatory particle (RP/PA700). The RP/PA700 complex is composed of at least 17 different subunits in two subcomplexes, the base and the lid, which form the portions proximal and distal to the 20S proteolytic core, respectively. Ubiquitous with highest expression in flowers.

Its function is as follows. Acts as a regulatory subunit of the 26S proteasome which is involved in the ATP-dependent degradation of ubiquitinated proteins. This is 26S proteasome non-ATPase regulatory subunit 13 homolog B (RPN9B) from Arabidopsis thaliana (Mouse-ear cress).